The chain runs to 353 residues: UPF0283 membrane protein YcjF (353 aa).

The segment covering Met1–Pro19 has biased composition (basic and acidic residues). A disordered region spans residues Met1–Arg35. 3 consecutive transmembrane segments (helical) span residues Met70–Thr90, Val100–Val120, and Glu213–Trp233.

The protein belongs to the UPF0283 family.

It is found in the cell inner membrane. This Salmonella dublin (strain CT_02021853) protein is UPF0283 membrane protein YcjF.